A 520-amino-acid polypeptide reads, in one-letter code: Signal peptide peptidase-like 2A (520 aa).

The N-terminal stretch at 1–25 (MGPQRRLSPAGAALLWGFLLQLTAA) is a signal peptide. Topologically, residues 26-172 (QEAILHASGN…PSWPNFDYTM (147 aa)) are lumenal. N-linked (GlcNAc...) asparagine glycans are attached at residues N58, N66, N74, N116, N126, and N149. A PA domain is found at 63 to 151 (SLMNLTSTPL…YKDFRDMNQT (89 aa)). The N-linked (GlcNAc...) (complex) asparagine glycan is linked to N155. A helical membrane pass occupies residues 173 to 193 (VVIFVIAVFTVALGGYWSGLV). The Cytoplasmic portion of the chain corresponds to 194-220 (ELENLKAVTTEDREMRKKKEEYLTFSP). A helical membrane pass occupies residues 221 to 241 (LTVVIFVVICCVMMVLLYFFY). At 242–247 (KWLVYV) the chain is on the lumenal side. The helical transmembrane segment at 248–268 (MIAIFCIASAMSLYNCLAALI) threads the bilayer. At 269-285 (HKIPYGQCTIACRGKNM) the chain is on the cytoplasmic side. A helical membrane pass occupies residues 286-306 (EVRLIFLSGLCIAVAVVWAVF). The Lumenal segment spans residues 307–311 (RNEDR). Residues 312–332 (WAWILQDILGIAFCLNLIKTL) form a helical membrane-spanning segment. Over 333-340 (KLPNFKSC) the chain is Cytoplasmic. Residues 341–361 (VILLGLLLLYDVFFVFITPFI) form a helical membrane-spanning segment. D351 is an active-site residue. Topologically, residues 362–399 (TKNGESIMVELAAGPFGNNEKLPVVIRVPKLIYFSVMS) are lumenal. A helical membrane pass occupies residues 400–420 (VCLMPVSILGFGDIIVPGLLI). D412 is a catalytic residue. The Cytoplasmic segment spans residues 421–437 (AYCRRFDVQTGSSYIYY). A helical membrane pass occupies residues 438-458 (VSSTVAYAIGMILTFVVLVLM). The Lumenal portion of the chain corresponds to 459–460 (KK). A helical membrane pass occupies residues 461 to 481 (GQPALLYLVPCTLITASVVAW). The short motif at 463 to 465 (PAL) is the PAL element. The Cytoplasmic portion of the chain corresponds to 482–520 (RRKEMKKFWKGNSYQMMDHLDCATNEENPVISGEQIVQQ). Residues 495–498 (YQMM) carry the YXXo lysosomal targeting motif motif.

It belongs to the peptidase A22B family. Interacts with ITM2B. Post-translationally, glycosylated. Ubiquitous.

It is found in the late endosome membrane. Its subcellular location is the lysosome membrane. The protein localises to the membrane. Its function is as follows. Intramembrane-cleaving aspartic protease (I-CLiP) that cleaves type II membrane signal peptides in the hydrophobic plane of the membrane. Functions in FASLG, ITM2B and TNF processing. Catalyzes the intramembrane cleavage of the anchored fragment of shed TNF-alpha (TNF), which promotes the release of the intracellular domain (ICD) for signaling to the nucleus. Also responsible for the intramembrane cleavage of Fas antigen ligand FASLG, which promotes the release of the intracellular FasL domain (FasL ICD). Essential for degradation of the invariant chain CD74 that plays a central role in the function of antigen-presenting cells in the immune system. Plays a role in the regulation of innate and adaptive immunity. Catalyzes the intramembrane cleavage of the simian foamy virus envelope glycoprotein gp130 independently of prior ectodomain shedding by furin or furin-like proprotein convertase (PC)-mediated cleavage proteolysis. The sequence is that of Signal peptide peptidase-like 2A from Homo sapiens (Human).